We begin with the raw amino-acid sequence, 233 residues long: Small ribosomal subunit protein uS3 (233 aa).

A KH type-2 domain is found at 39–107 (VRQFLMKKLV…PAQINISEVR (69 aa)).

It belongs to the universal ribosomal protein uS3 family. In terms of assembly, part of the 30S ribosomal subunit. Forms a tight complex with proteins S10 and S14.

Its function is as follows. Binds the lower part of the 30S subunit head. Binds mRNA in the 70S ribosome, positioning it for translation. In Buchnera aphidicola subsp. Schizaphis graminum (strain Sg), this protein is Small ribosomal subunit protein uS3.